Consider the following 123-residue polypeptide: Large ribosomal subunit protein uL29x (123 aa).

This sequence belongs to the universal ribosomal protein uL29 family.

This Arabidopsis thaliana (Mouse-ear cress) protein is Large ribosomal subunit protein uL29x (RPL35C).